Here is a 218-residue protein sequence, read N- to C-terminus: Peptidase E (218 aa).

Residues Ser123, Asp138, and His160 each act as charge relay system in the active site.

Belongs to the peptidase S51 family.

It localises to the cytoplasm. The catalysed reaction is Dipeptidase E catalyzes the hydrolysis of dipeptides Asp-|-Xaa. It does not act on peptides with N-terminal Glu, Asn or Gln, nor does it cleave isoaspartyl peptides.. Its function is as follows. Hydrolyzes dipeptides containing N-terminal aspartate residues. May play a role in allowing the cell to use peptide aspartate to spare carbon otherwise required for the synthesis of the aspartate family of amino acids. In Haemophilus influenzae (strain ATCC 51907 / DSM 11121 / KW20 / Rd), this protein is Peptidase E.